The sequence spans 207 residues: Ubiquinol-cytochrome c reductase iron-sulfur subunit (207 aa).

Residues 24 to 44 (LVAATSVVGAVGAGYALVPFV) traverse the membrane as a helical segment. The 100-residue stretch at 100–199 (PKLVDPTSEV…HVYLNDTTIL (100 aa)) folds into the Rieske domain. [2Fe-2S] cluster contacts are provided by cysteine 134, histidine 136, cysteine 162, and histidine 165. Cysteine 139 and cysteine 164 are oxidised to a cystine.

In terms of assembly, the main subunits of complex b-c1 are: cytochrome b, cytochrome c1 and the Rieske protein. [2Fe-2S] cluster is required as a cofactor.

It is found in the cell membrane. It catalyses the reaction a quinol + 2 Fe(III)-[cytochrome c](out) = a quinone + 2 Fe(II)-[cytochrome c](out) + 2 H(+)(out). In terms of biological role, component of the ubiquinol-cytochrome c reductase complex (complex III or cytochrome b-c1 complex), which is a respiratory chain that generates an electrochemical potential coupled to ATP synthesis. This chain is Ubiquinol-cytochrome c reductase iron-sulfur subunit (petA), found in Allochromatium vinosum (strain ATCC 17899 / DSM 180 / NBRC 103801 / NCIMB 10441 / D) (Chromatium vinosum).